The primary structure comprises 130 residues: Ribonuclease P protein component 2 (130 aa).

This sequence belongs to the eukaryotic/archaeal RNase P protein component 2 family. Consists of a catalytic RNA component and at least 4-5 protein subunits.

It localises to the cytoplasm. It catalyses the reaction Endonucleolytic cleavage of RNA, removing 5'-extranucleotides from tRNA precursor.. In terms of biological role, part of ribonuclease P, a protein complex that generates mature tRNA molecules by cleaving their 5'-ends. This is Ribonuclease P protein component 2 from Methanococcus vannielii (strain ATCC 35089 / DSM 1224 / JCM 13029 / OCM 148 / SB).